Reading from the N-terminus, the 247-residue chain is Epidermal cell differentiation inhibitor (247 aa).

Residues 1-35 (MKNKLLFKIFLSLSLALSVYSINDKIIEVSNTSLA) form the signal peptide. One can recognise a TR mART core domain in the interval 39 to 247 (KNFTDLDEAT…IIITAIVFKK (209 aa)). Residues arginine 120, serine 173, and glutamate 215 contribute to the active site.

To ADP-ribosyltransferase C3 of Clostridium.

Inhibits terminal differentiation of cultured mouse keratinocytes. In culture, also inhibits the differentiation of human keratinocytes. Probable ADP-ribosyltransferase. This is Epidermal cell differentiation inhibitor from Staphylococcus aureus.